The chain runs to 139 residues: Protein LTO1 homolog (139 aa).

It belongs to the LTO1 family.

The protein is Protein LTO1 homolog of Dictyostelium discoideum (Social amoeba).